Reading from the N-terminus, the 83-residue chain is U5-theraphotoxin-Hs1b 2 (83 aa).

An N-terminal signal peptide occupies residues 1–21 (MQTSMFLTLTGLVLLFVVCYA). A propeptide spanning residues 22–49 (SESEEKEFPKELLSSIFAADSDFKEEER) is cleaved from the precursor. Cystine bridges form between C51–C63, C56–C68, and C62–C75.

The protein belongs to the neurotoxin 10 (Hwtx-1) family. 51 (Hntx-8) subfamily. Hntx-8 sub-subfamily. In terms of tissue distribution, expressed by the venom gland.

It localises to the secreted. Its function is as follows. Agglutinates erythrocytes. This chain is U5-theraphotoxin-Hs1b 2, found in Cyriopagopus schmidti (Chinese bird spider).